The following is a 191-amino-acid chain: Zinc finger protein GIS2 (191 aa).

Residues 55-77 (FKCHYCFRNFPTSQALGGHQNAH) form a C2H2-type zinc finger.

As to expression, expressed in inflorescence meristems, floral meristems and stem epidermis.

It is found in the nucleus. Functionally, probable transcription factor required for the initiation of inflorescence trichomes in response to gibberellin and cytokinin. Is not involved in the regulation of trichome branching. Is functionally equivalent to ZFP8. The protein is Zinc finger protein GIS2 (GIS2) of Arabidopsis thaliana (Mouse-ear cress).